The chain runs to 110 residues: Ribonuclease H2 subunit C (110 aa).

A disordered region spans residues 45-69 (LKREKSATPSSSDNTTSNTFSNGAI). Positions 51–66 (ATPSSSDNTTSNTFSN) are enriched in low complexity.

It belongs to the RNase H2 subunit C family. Highly divergent. The RNase 2 complex is a heterotrimer composed of the catalytic subunit RNH201 and of the non-catalytic subunits RNH202 and RNH203.

It localises to the cytoplasm. Its subcellular location is the nucleus. Its function is as follows. Non catalytic subunit of RNase H2, an endonuclease that specifically degrades the RNA of RNA:DNA hybrids. Participates in DNA replication, possibly by mediating the removal of lagging-strand Okazaki fragment RNA primers during DNA replication. Mediates the excision of single ribonucleotides from DNA:RNA duplexes. This chain is Ribonuclease H2 subunit C (RNH203), found in Saccharomyces cerevisiae (strain ATCC 204508 / S288c) (Baker's yeast).